The primary structure comprises 1147 residues: Probable phospholipid-transporting ATPase IIB (1147 aa).

The Cytoplasmic portion of the chain corresponds to 1–146 (MADQIPLYPV…NQKYNVFTFI (146 aa)). The helical transmembrane segment at 147–168 (PGVLYEQFKFFLNLYFLVISCS) threads the bilayer. Topologically, residues 169-173 (QFVPA) are extracellular. Residues 174-196 (LKIGYLYTYWAPLGFVLAVTMTR) traverse the membrane as a helical segment. Residues 197–380 (EAIDEFRRFQ…GLLDLELNRL (184 aa)) are Cytoplasmic-facing. Residues 381 to 401 (TKALFLALVALSIVMVTLQGF) form a helical membrane-spanning segment. The Extracellular portion of the chain corresponds to 402–409 (VGPWYRNL). A helical membrane pass occupies residues 410 to 431 (FRFLLLFSYIIPISLRVNLDMG). Residues 432-930 (KAVYGWMMMK…GRNSYKRSAA (499 aa)) are Cytoplasmic-facing. The active-site 4-aspartylphosphate intermediate is Asp468. Positions 468, 469, and 470 each coordinate ATP. Asp468 is a binding site for Mg(2+). Position 470 (Thr470) interacts with Mg(2+). Residues 503 to 535 (RDSYSQMQSQAGGNNTGSTPLRKAQSSAPKVRK) form a disordered region. A compositionally biased stretch (polar residues) spans 505 to 530 (SYSQMQSQAGGNNTGSTPLRKAQSSA). Residues Glu591, Phe633, Lys638, Lys657, Arg686, Thr687, Thr766, Gly767, Asp768, Arg848, and Lys854 each contribute to the ATP site. Asp874 provides a ligand contact to Mg(2+). 2 residues coordinate ATP: Asn877 and Asp878. Asp878 contacts Mg(2+). The chain crosses the membrane as a helical span at residues 931-951 (LGQFVMHRGLIISTMQAVFSS). At 952–963 (VFYFASVPLYQG) the chain is on the extracellular side. Residues 964-982 (FLMVGYATIYTMFPVFSLV) traverse the membrane as a helical segment. Residues 983 to 1012 (LDQDVKPEMAMLYPELYKDLTKGRSLSFKT) lie on the Cytoplasmic side of the membrane. Residues 1013–1031 (FLIWVLISIYQGGILMYGA) form a helical membrane-spanning segment. Residues 1032–1038 (LVLFESE) lie on the Extracellular side of the membrane. A helical membrane pass occupies residues 1039–1061 (FVHVVAISFTALILTELLMVALT). Over 1062–1067 (VRTWHW) the chain is Cytoplasmic. Residues 1068–1088 (LMVVAEFLSLGCYVSSLAFLN) traverse the membrane as a helical segment. The Extracellular segment spans residues 1089–1105 (EYFGIGRVSFGAFLDVA). The chain crosses the membrane as a helical span at residues 1106–1130 (FITTVTFLWKVSAITVVSCLPLYVL). The Cytoplasmic segment spans residues 1131-1147 (KYLRRKLSPPSYCKLAS).

This sequence belongs to the cation transport ATPase (P-type) (TC 3.A.3) family. Type IV subfamily. Mg(2+) is required as a cofactor.

The protein resides in the golgi apparatus. It is found in the trans-Golgi network membrane. It catalyses the reaction ATP + H2O + phospholipidSide 1 = ADP + phosphate + phospholipidSide 2.. In Homo sapiens (Human), this protein is Probable phospholipid-transporting ATPase IIB (ATP9B).